A 230-amino-acid chain; its full sequence is MKITWLGHSGFRIAIEQAVLLVDPWLTGNPLFPADRREEALAGATHILITHGHGDHTGDTVAIAKERGLPVVGIYDLVTWLQEKEGIDGIGFNKGGTVTLGGARVTMVQATHSSSMSGEAGPIYTGTESGYMIAGEGHVIYLSGDTDIMADMGWMGEYHRPDVGILSAGGHFTMDMKRAAFAARKYFDFRTVIPCHYRTFPLLEQSAEALKEGLPGVEVIEPQVLVPIDI.

Belongs to the UPF0173 family.

The chain is UPF0173 metal-dependent hydrolase RHOS4_08540 from Cereibacter sphaeroides (strain ATCC 17023 / DSM 158 / JCM 6121 / CCUG 31486 / LMG 2827 / NBRC 12203 / NCIMB 8253 / ATH 2.4.1.) (Rhodobacter sphaeroides).